We begin with the raw amino-acid sequence, 320 residues long: Methionyl-tRNA formyltransferase (320 aa).

Residue 111–114 (SLLP) coordinates (6S)-5,6,7,8-tetrahydrofolate.

It belongs to the Fmt family.

The catalysed reaction is L-methionyl-tRNA(fMet) + (6R)-10-formyltetrahydrofolate = N-formyl-L-methionyl-tRNA(fMet) + (6S)-5,6,7,8-tetrahydrofolate + H(+). In terms of biological role, attaches a formyl group to the free amino group of methionyl-tRNA(fMet). The formyl group appears to play a dual role in the initiator identity of N-formylmethionyl-tRNA by promoting its recognition by IF2 and preventing the misappropriation of this tRNA by the elongation apparatus. This chain is Methionyl-tRNA formyltransferase, found in Methylacidiphilum infernorum (isolate V4) (Methylokorus infernorum (strain V4)).